The chain runs to 495 residues: uncharacterized protein (495 aa).

Its subcellular location is the cytoplasm. It localises to the nucleus. This is an uncharacterized protein from Saccharomyces cerevisiae (strain ATCC 204508 / S288c) (Baker's yeast).